A 151-amino-acid polypeptide reads, in one-letter code: Transcriptional repressor NrdR (151 aa).

A zinc finger lies at 3 to 34; it reads CPYCGYEETRVLDSRVDSSGMTVRRRRECVKC. In terms of domain architecture, ATP-cone spans 49–139; it reads VFVVKKDGKR…VYKDFREIDQ (91 aa).

This sequence belongs to the NrdR family. Requires Zn(2+) as cofactor.

Negatively regulates transcription of bacterial ribonucleotide reductase nrd genes and operons by binding to NrdR-boxes. In Thermosipho melanesiensis (strain DSM 12029 / CIP 104789 / BI429), this protein is Transcriptional repressor NrdR.